Here is a 190-residue protein sequence, read N- to C-terminus: MRAFKVTRDTNETKIHLELNIDGTGKYAIKTGIAFFDHVLSSFAKHGAFDLKLDVLGDLEIDDHHTVEDVGIVLGKAFENMEKKNIKRFGWAIIPMDEAKATVSIDIGGRPYVVGNYTPNTEKIGNFSTENVVHFFESFSNNAKINLHFEVTGENEHHKVEALFKAFGVAMDMATHVDERKGIVSTKGVI.

It belongs to the imidazoleglycerol-phosphate dehydratase family.

It is found in the cytoplasm. The enzyme catalyses D-erythro-1-(imidazol-4-yl)glycerol 3-phosphate = 3-(imidazol-4-yl)-2-oxopropyl phosphate + H2O. The protein operates within amino-acid biosynthesis; L-histidine biosynthesis; L-histidine from 5-phospho-alpha-D-ribose 1-diphosphate: step 6/9. The chain is Imidazoleglycerol-phosphate dehydratase from Methanococcus maripaludis (strain C5 / ATCC BAA-1333).